A 35-amino-acid polypeptide reads, in one-letter code: Photosystem II reaction center protein T (35 aa).

A helical transmembrane segment spans residues 3–23 (ALVYTFLLVGTLGIIFFAIFF).

Belongs to the PsbT family. As to quaternary structure, PSII is composed of 1 copy each of membrane proteins PsbA, PsbB, PsbC, PsbD, PsbE, PsbF, PsbH, PsbI, PsbJ, PsbK, PsbL, PsbM, PsbT, PsbY, PsbZ, Psb30/Ycf12, at least 3 peripheral proteins of the oxygen-evolving complex and a large number of cofactors. It forms dimeric complexes.

It localises to the plastid. The protein resides in the chloroplast thylakoid membrane. Found at the monomer-monomer interface of the photosystem II (PS II) dimer, plays a role in assembly and dimerization of PSII. PSII is a light-driven water plastoquinone oxidoreductase, using light energy to abstract electrons from H(2)O, generating a proton gradient subsequently used for ATP formation. In Chara vulgaris (Common stonewort), this protein is Photosystem II reaction center protein T.